The chain runs to 106 residues: Large ribosomal subunit protein uL24 (106 aa).

Residues Glu84–Arg97 are compositionally biased toward basic and acidic residues. The tract at residues Glu84–Lys106 is disordered.

It belongs to the universal ribosomal protein uL24 family. Part of the 50S ribosomal subunit.

Its function is as follows. One of two assembly initiator proteins, it binds directly to the 5'-end of the 23S rRNA, where it nucleates assembly of the 50S subunit. In terms of biological role, one of the proteins that surrounds the polypeptide exit tunnel on the outside of the subunit. This chain is Large ribosomal subunit protein uL24, found in Anaeromyxobacter dehalogenans (strain 2CP-C).